The following is a 413-amino-acid chain: Tryptophan synthase beta chain (413 aa).

K106 is subject to N6-(pyridoxal phosphate)lysine.

Belongs to the TrpB family. In terms of assembly, tetramer of two alpha and two beta chains. The cofactor is pyridoxal 5'-phosphate.

The catalysed reaction is (1S,2R)-1-C-(indol-3-yl)glycerol 3-phosphate + L-serine = D-glyceraldehyde 3-phosphate + L-tryptophan + H2O. The protein operates within amino-acid biosynthesis; L-tryptophan biosynthesis; L-tryptophan from chorismate: step 5/5. Its function is as follows. The beta subunit is responsible for the synthesis of L-tryptophan from indole and L-serine. This is Tryptophan synthase beta chain from Methylobacterium radiotolerans (strain ATCC 27329 / DSM 1819 / JCM 2831 / NBRC 15690 / NCIMB 10815 / 0-1).